A 323-amino-acid polypeptide reads, in one-letter code: Calcium homeostasis modulator protein 2 (323 aa).

Residues 1–21 (MAALIAENFRFLSLFFKSKDV) are Cytoplasmic-facing. The central pore stretch occupies residues 14 to 39 (LFFKSKDVMIFNGLVALGTVGSQELF). The chain crosses the membrane as a helical span at residues 22–43 (MIFNGLVALGTVGSQELFSVVA). Residues 44-52 (FHCPCSPAR) are Extracellular-facing. Disulfide bonds link C46-C130 and C48-C162. The chain crosses the membrane as a helical span at residues 53-76 (NYLYGLTAIGVPALALFLIGVILN). The Cytoplasmic segment spans residues 77–101 (NHTWNLVAECQYRRAKNCSAAPNFL). The helical transmembrane segment at 102–132 (LLSSILGRAAVAPVTWSVISLLRGEAYVCAL) threads the bilayer. Topologically, residues 133 to 179 (SEFVDPSSLTAGDKGFPPAHATEVLARFPCGEGPANLSSFREEVSRR) are extracellular. Residues 145–152 (DKGFPPAH) are hemichannel docking. The helical transmembrane segment at 180–206 (LKYESQLFGWLLIGVVAILVFLTKCLK) threads the bilayer. The Cytoplasmic portion of the chain corresponds to 207–323 (HYCSPLSYRQ…DNVEMALLTA (117 aa)). The intersubunit interaction stretch occupies residues 214-251 (YRQEAYWAQYRTNEDQLFQRTAEVHSRVLAANNVRRFF).

This sequence belongs to the CALHM family. In terms of assembly, homo-undecamer. Two undecameric hemichannels can assemble in a head-to-head manner to form a gap junction. Neuron, astrocyte, and microglia.

The protein localises to the cell membrane. The catalysed reaction is ATP(in) = ATP(out). Inhibited by divalent cations such as Co(2+) and Ni(2+). In terms of biological role, pore-forming subunit of Ca(2+) homeostasis modulator channels. Mediates ATP release from astrocytes and ATP-induced Ca(2+) influx in microglia thus regulating neuronal ATP and Ca(2+) homeostasis, synaptic transmission and neuroinflammatory response. May form intercellular gap junctions. The gating mechanism remains unknown. The sequence is that of Calcium homeostasis modulator protein 2 from Mus musculus (Mouse).